Consider the following 1909-residue polypeptide: MVMEDEPREATIKPSYWLDACEDISCDLIDDLVSEFDPSSVAVNESTDENGVINDFFGGIDHILDSIKNGGGLPNNGVSDTNSQINEVTVTPQVIAKETVKENGLQKNGGKRDEFSKEEGDKDRKRARVCSYQSERSNLSGRGHVNNSREGDRFMNRKRTRNWDEAGNNKKKRECNNYRRDGRDREVRGYWERDKVGSNELVYRSGTWEADHERDVKKVSGGNRECDVKAEENKSKPEERKEKVVEEQARRYQLDVLEQAKAKNTIAFLETGAGKTLIAILLIKSVHKDLMSQNRKMLSVFLVPKVPLVYQQAEVIRNQTCFQVGHYCGEMGQDFWDSRRWQREFESKQVLVMTAQILLNILRHSIIRMETIDLLILDECHHAVKKHPYSLVMSEFYHTTPKDKRPAIFGMTASPVNLKGVSSQVDCAIKIRNLETKLDSTVCTIKDRKELEKHVPMPSEIVVEYDKAATMWSLHETIKQMIAAVEEAAQASSRKSKWQFMGARDAGAKDELRQVYGVSERTESDGAANLIHKLRAINYTLAELGQWCAYKVGQSFLSALQSDERVNFQVDVKFQESYLSEVVSLLQCELLEGAAAEKVAAEVGKPENGNAHDEMEEGELPDDPVVSGGEHVDEVIGAAVADGKVTPKVQSLIKLLLKYQHTADFRAIVFVERVVAALVLPKVFAELPSLSFIRCASMIGHNNSQEMKSSQMQDTISKFRDGHVTLLVATSVAEEGLDIRQCNVVMRFDLAKTVLAYIQSRGRARKPGSDYILMVERGNVSHAAFLRNARNSEETLRKEAIERTDLSHLKDTSRLISIDAVPGTVYKVEATGAMVSLNSAVGLVHFYCSQLPGDRYAILRPEFSMEKHEKPGGHTEYSCRLQLPCNAPFEILEGPVCSSMRLAQQAVCLAACKKLHEMGAFTDMLLPDKGSGQDAEKADQDDEGEPVPGTARHREFYPEGVADVLKGEWVSSGKEVCESSKLFHLYMYNVRCVDFGSSKDPFLSEVSEFAILFGNELDAEVLSMSMDLYVARAMITKASLAFKGSLDITENQLSSLKKFHVRLMSIVLDVDVEPSTTPWDPAKAYLFVPVTDNTSMEPIKGINWELVEKITKTTAWDNPLQRARPDVYLGTNERTLGGDRREYGFGKLRHNIVFGQKSHPTYGIRGAVASFDVVRASGLLPVRDAFEKEVEEDLSKGKLMMADGCMVAEDLIGKIVTAAHSGKRFYVDSICYDMSAETSFPRKEGYLGPLEYNTYADYYKQKYGVDLNCKQQPLIKGRGVSYCKNLLSPRFEQSGESETVLDKTYYVFLPPELCVVHPLSGSLIRGAQRLPSIMRRVESMLLAVQLKNLISYPIPTSKILEALTAASCQETFCYERAELLGDAYLKWVVSRFLFLKYPQKHEGQLTRMRQQMVSNMVLYQFALVKGLQSYIQADRFAPSRWSAPGVPPVFDEDTKDGGSSFFDEEQKPVSEENSDVFEDGEMEDGELEGDLSSYRVLSSKTLADVVEALIGVYYVEGGKIAANHLMKWIGIHVEDDPDEVDGTLKNVNVPESVLKSIDFVGLERALKYEFKEKGLLVEAITHASRPSSGVSCYQRLEFVGDAVLDHLITRHLFFTYTSLPPGRLTDLRAAAVNNENFARVAVKHKLHLYLRHGSSALEKQIREFVKEVQTESSKPGFNSFGLGDCKAPKVLGDIVESIAGAIFLDSGKDTTAAWKVFQPLLQPMVTPETLPMHPVRELQERCQQQAEGLEYKASRSGNTATVEVFIDGVQVGVAQNPQKKMAQKLAARNALAALKEKEIAESKEKHINNGNAGEDQGENENGNKKNGHQPFTRQTLNDICLRKNWPMPSYRCVKEGGPAHAKRFTFGVRVNTSDRGWTDECIGEPMPSVKKAKDSAAVLLLELLNKTFS.

The segment at 99–177 (TVKENGLQKN…NNKKKRECNN (79 aa)) is disordered. A compositionally biased stretch (basic and acidic residues) spans 110–124 (GKRDEFSKEEGDKDR). The span at 131-146 (SYQSERSNLSGRGHVN) shows a compositional bias: polar residues. Residues 147 to 177 (NSREGDRFMNRKRTRNWDEAGNNKKKRECNN) are compositionally biased toward basic and acidic residues. Residues 256–433 (VLEQAKAKNT…QVDCAIKIRN (178 aa)) form the Helicase ATP-binding domain. ATP is bound at residue 269-276 (LETGAGKT). Positions 378–381 (DECH) match the DECH box motif. In terms of domain architecture, Helicase C-terminal spans 651–812 (SLIKLLLKYQ…RTDLSHLKDT (162 aa)). The 96-residue stretch at 840–935 (AVGLVHFYCS…LPDKGSGQDA (96 aa)) folds into the Dicer dsRNA-binding fold domain. The interval 929–952 (KGSGQDAEKADQDDEGEPVPGTAR) is disordered. One can recognise a PAZ domain in the interval 1189-1318 (EVEEDLSKGK…LPPELCVVHP (130 aa)). RNase III domains lie at 1342 to 1518 (LAVQ…VEGG) and 1559 to 1707 (FVGL…LDSG). The Mg(2+) site is built by Glu-1597, Asp-1693, and Glu-1696. 2 consecutive DRBM domains span residues 1733 to 1796 (HPVR…ALKE) and 1831 to 1906 (FTRQ…LLNK). The interval 1801-1831 (ESKEKHINNGNAGEDQGENENGNKKNGHQPF) is disordered.

The protein belongs to the helicase family. Dicer subfamily. As to quaternary structure, interacts (via N-terminus) with DDL. Interacts (via DRBM domains) with DRB1, DRB2 and DRB5. May interact with AGO1 or AGO10 through their common PAZ domains. Mg(2+) serves as cofactor. Mn(2+) is required as a cofactor. As to expression, highly expressed in flowers and seeds and detected in leaves and stems. Found in ovule integuments, inflorescence and floral meristems, stigma of flowers until just before pollination, vasculature of the funiculus, and embryo.

It is found in the nucleus. Ribonuclease (RNase) III involved in RNA-mediated post-transcriptional gene silencing (PTGS). Functions in the microRNAs (miRNAs) biogenesis pathway by cleaving primary miRNAs (pri-miRNAs) and precursor miRNAs (pre-miRNAs). Functions with DRB1/HYL1 and SERRATE proteins for accurate pri-miRNAs to miRNAs processing. Indirectly involved in the production of trans-acting small interfering RNAs (ta-siRNAs) derived from the TAS1, TAS2 or TAS3 endogenous transcripts by participating in the production of their initiating miRNAs. Involved in the processing of natural siRNAs (nat-siRNAs, derived from cis-natural antisense transcripts) by cleaving 24 nucleotide nat-siRNAs into 21 nucleotide nat-siRNAs. Can produce RDR6-dependent endogenous ta-siRNAs derived from TAS1 and TAS2. Required for the production of 30-40 nucleotide bacterial-induced long siRNAs (lsiRNA). Acts redundantly with DICER-LIKE 3 (DCL3) to promote flowering via repression of FLOWERING LOCUS C (FLC). Represses antiviral RNA silencing through negative regulation of the expression of DCL4 and DCL3. In Arabidopsis thaliana (Mouse-ear cress), this protein is Endoribonuclease Dicer homolog 1 (DCL1).